The chain runs to 383 residues: Guanine nucleotide-binding protein alpha-1 subunit (383 aa).

The segment at 1–20 is disordered; it reads MGLLCSRSRHHTEDTDENTQ. The N-myristoyl glycine moiety is linked to residue Gly2. Cys5 is lipidated: S-palmitoyl cysteine. The G-alpha domain occupies 37 to 383; that stretch reads HIRKLLLLGA…RRNLLEAGLL (347 aa). A G1 motif region spans residues 40–53; it reads KLLLLGAGESGKST. Residues Glu48, Ser49, Gly50, Lys51, Ser52, Thr53, Asp162, Leu187, Tyr188, Thr193, Gly221, Asn287, Lys288, Asp290, and Ala355 each contribute to the GTP site. Residue Ser52 coordinates Mg(2+). Residues 185-193 are G2 motif; it reads DVLYARVRT. Mg(2+) is bound at residue Thr193. The interval 214-223 is G3 motif; that stretch reads YRLFDVGGQR. The segment at 283-290 is G4 motif; the sequence is MLFLNKFD. A G5 motif region spans residues 353–358; it reads TTALDQ.

This sequence belongs to the G-alpha family. G proteins are composed of 3 units; alpha, beta and gamma. The alpha chain contains the guanine nucleotide binding site. Interacts with RGS1, THF1, the pirin protein PRN1, GTG1 and GTG2. Binds to GCR1. May interact with ADT3. No interactions with RACK1A, RACK1B or RACK1C. Interacts with PLDALPHA1. Interacts with CAND2/PMTR1. The cofactor is Mg(2+). In terms of tissue distribution, more abundant in roots and/or leaves.

It is found in the cell membrane. In terms of biological role, exhibits a fast rate of basal nucleotide exchange. Guanine nucleotide-binding proteins (G proteins) are involved as modulators or transducers in various transmembrane signaling systems. Together with GCR1, may regulate the cell cycle via a signaling cascade that uses phosphatidylinositol-specific phospholipase C (PI-PLC) as an effector and inositol 1,4,5-trisphosphate (IP(3)) as a second messenger. Promotes abscisic acid (ABA) responses in guard cells. Involved in the blue light (BL) signaling. Together with GCR1 and ADT3, required for BL-mediated synthesis of phenylpyruvate and subsequently of phenylalanine (Phe), in etiolated seedlings. Modulates root architecture (e.g. lateral root formation). Negatively regulated by RGS1. In collaboration with CAND2/PMTR1, regulates the melatonin-mediated stomatal closure involving H(2)O(2) and Ca(2+) signals. In Arabidopsis thaliana (Mouse-ear cress), this protein is Guanine nucleotide-binding protein alpha-1 subunit.